Here is a 117-residue protein sequence, read N- to C-terminus: Large ribosomal subunit protein bL19 (117 aa).

It belongs to the bacterial ribosomal protein bL19 family.

In terms of biological role, this protein is located at the 30S-50S ribosomal subunit interface and may play a role in the structure and function of the aminoacyl-tRNA binding site. This chain is Large ribosomal subunit protein bL19, found in Aliivibrio fischeri (strain ATCC 700601 / ES114) (Vibrio fischeri).